The chain runs to 134 residues: Large ribosomal subunit protein uL16c (134 aa).

The protein belongs to the universal ribosomal protein uL16 family. In terms of assembly, part of the 50S ribosomal subunit.

The protein localises to the plastid. Its subcellular location is the chloroplast. The sequence is that of Large ribosomal subunit protein uL16c from Solanum lycopersicum (Tomato).